Reading from the N-terminus, the 359-residue chain is 3-dehydroquinate synthase (359 aa).

NAD(+)-binding positions include 71-76 (DGEAHK), 105-109 (GVIGD), 129-130 (TT), lysine 142, lysine 151, and 169-172 (TLHT). Residues glutamate 184, histidine 247, and histidine 264 each contribute to the Zn(2+) site.

The protein belongs to the sugar phosphate cyclases superfamily. Dehydroquinate synthase family. Co(2+) is required as a cofactor. Zn(2+) serves as cofactor. It depends on NAD(+) as a cofactor.

It localises to the cytoplasm. It catalyses the reaction 7-phospho-2-dehydro-3-deoxy-D-arabino-heptonate = 3-dehydroquinate + phosphate. The protein operates within metabolic intermediate biosynthesis; chorismate biosynthesis; chorismate from D-erythrose 4-phosphate and phosphoenolpyruvate: step 2/7. Functionally, catalyzes the conversion of 3-deoxy-D-arabino-heptulosonate 7-phosphate (DAHP) to dehydroquinate (DHQ). This is 3-dehydroquinate synthase from Neisseria meningitidis serogroup C (strain 053442).